The chain runs to 120 residues: Large ribosomal subunit protein bL19 (120 aa).

It belongs to the bacterial ribosomal protein bL19 family.

In terms of biological role, this protein is located at the 30S-50S ribosomal subunit interface and may play a role in the structure and function of the aminoacyl-tRNA binding site. This chain is Large ribosomal subunit protein bL19, found in Chlorobium phaeobacteroides (strain DSM 266 / SMG 266 / 2430).